Reading from the N-terminus, the 149-residue chain is Large ribosomal subunit protein bL9 (149 aa).

This sequence belongs to the bacterial ribosomal protein bL9 family.

Its function is as follows. Binds to the 23S rRNA. The protein is Large ribosomal subunit protein bL9 of Leptospira interrogans serogroup Icterohaemorrhagiae serovar copenhageni (strain Fiocruz L1-130).